A 175-amino-acid chain; its full sequence is Ribosome maturation factor RimM (175 aa).

The PRC barrel domain maps to 96-175; it reads EEDYYWHDLI…TITVDWDAGF (80 aa).

This sequence belongs to the RimM family. As to quaternary structure, binds ribosomal protein uS19.

It localises to the cytoplasm. Its function is as follows. An accessory protein needed during the final step in the assembly of 30S ribosomal subunit, possibly for assembly of the head region. Essential for efficient processing of 16S rRNA. May be needed both before and after RbfA during the maturation of 16S rRNA. It has affinity for free ribosomal 30S subunits but not for 70S ribosomes. This chain is Ribosome maturation factor RimM, found in Haemophilus ducreyi (strain 35000HP / ATCC 700724).